The chain runs to 208 residues: 2-dehydro-3-deoxy-phosphogluconate aldolase (208 aa).

Glu41 (proton acceptor) is an active-site residue. Arg45, Thr68, and Lys128 together coordinate pyruvate. The active-site Schiff-base intermediate with substrate is the Lys128.

The protein belongs to the KHG/KDPG aldolase family. As to quaternary structure, homotrimer.

The protein localises to the cytoplasm. The catalysed reaction is 2-dehydro-3-deoxy-6-phospho-D-gluconate = D-glyceraldehyde 3-phosphate + pyruvate. Its pathway is carbohydrate acid metabolism; 2-dehydro-3-deoxy-D-gluconate degradation; D-glyceraldehyde 3-phosphate and pyruvate from 2-dehydro-3-deoxy-D-gluconate: step 2/2. Functionally, involved in the degradation of glucose via the Entner-Doudoroff pathway. Catalyzes the reversible, stereospecific retro-aldol cleavage of 2-keto-3-deoxy-6-phosphogluconate (KDPG) to pyruvate and D-glyceraldehyde-3-phosphate. This chain is 2-dehydro-3-deoxy-phosphogluconate aldolase, found in Zymomonas mobilis subsp. mobilis (strain ATCC 31821 / ZM4 / CP4).